Here is a 231-residue protein sequence, read N- to C-terminus: Ubiquinone biosynthesis protein coq-4, mitochondrial (231 aa).

Zn(2+) contacts are provided by His-133, Asp-134, His-137, and Glu-149.

Belongs to the COQ4 family. Component of a multi-subunit COQ enzyme complex. It depends on Zn(2+) as a cofactor.

It localises to the mitochondrion inner membrane. The catalysed reaction is a 4-hydroxy-3-methoxy-5-(all-trans-polyprenyl)benzoate + H(+) = a 2-methoxy-6-(all-trans-polyprenyl)phenol + CO2. Its pathway is cofactor biosynthesis; ubiquinone biosynthesis. Lyase that catalyzes the C1-decarboxylation of 4-hydroxy-3-methoxy-5-(all-trans-polyprenyl)benzoic acid into 2-methoxy-6-(all-trans-polyprenyl)phenol during ubiquinone biosynthesis. The protein is Ubiquinone biosynthesis protein coq-4, mitochondrial of Caenorhabditis elegans.